Reading from the N-terminus, the 299-residue chain is Recombination-associated protein RdgC (299 aa).

Belongs to the RdgC family.

The protein localises to the cytoplasm. It is found in the nucleoid. Functionally, may be involved in recombination. This chain is Recombination-associated protein RdgC, found in Neisseria meningitidis serogroup C (strain 053442).